A 595-amino-acid polypeptide reads, in one-letter code: Wee1-like protein kinase 1-B (595 aa).

Residues 1–17 (MNVQPRNMNVQPRNMNV) show a composition bias toward polar residues. The tract at residues 1-127 (MNVQPRNMNV…CPGTPPHKTF (127 aa)) is disordered. A compositionally biased stretch (pro residues) spans 111–122 (PTSPIPECPGTP). Position 186 is a phosphothreonine; by cdk1 (threonine 186). Residues 248-518 (FHELEKIGSG…SVALVKHSVL (271 aa)) enclose the Protein kinase domain. Residues 254 to 262 (IGSGEFGSV) and lysine 277 each bind ATP. Catalysis depends on aspartate 375, which acts as the Proton acceptor. Mg(2+) is bound by residues asparagine 380 and aspartate 412. The stretch at 526–563 (AEQLRIELDAEKFKNALLQKELKKAQIAKAAAEERAHF) forms a coiled coil.

The protein belongs to the protein kinase superfamily. Ser/Thr protein kinase family. WEE1 subfamily. As to quaternary structure, interacts (when phosphorylated at Thr-186) with pin1. Phosphorylation at Thr-186 during M-phase by cdk1 inhibits the kinase activity and leads to interaction with pin1. As to expression, zygotically expressed. Present in oocytes and postgastrula embryos (at least until the tailbud stage). Expression begins at the midblastula stage and increases after the early gastrula stage.

It is found in the nucleus. The enzyme catalyses L-tyrosyl-[protein] + ATP = O-phospho-L-tyrosyl-[protein] + ADP + H(+). In terms of biological role, acts as a zygotic negative regulator of entry into mitosis (G2 to M transition) by protecting the nucleus from cytoplasmically activated cyclin B1-complexed cdk1 before the onset of mitosis by mediating phosphorylation of cdk1 on 'Tyr-15'. Specifically phosphorylates and inactivates cyclin B1-complexed cdk1 reaching a maximum during G2 phase and a minimum as cells enter M phase. Phosphorylation of cyclin B1-cdk1 occurs exclusively on 'Tyr-15' and phosphorylation of monomeric cdk1 does not occur. The polypeptide is Wee1-like protein kinase 1-B (wee1-b) (Xenopus laevis (African clawed frog)).